The primary structure comprises 72 residues: UPF0270 protein KPN78578_37030 (72 aa).

It belongs to the UPF0270 family.

The protein is UPF0270 protein KPN78578_37030 of Klebsiella pneumoniae subsp. pneumoniae (strain ATCC 700721 / MGH 78578).